The sequence spans 353 residues: rRNA methyltransferase 1, mitochondrial (353 aa).

The transit peptide at 1-20 directs the protein to the mitochondrion; that stretch reads MALLSTVRGATWGRLVTRHF. Residues 311-353 are disordered; it reads PTEGERRQLLQDPQEPSARSEGLSMAQHPGLSSGPEKERQNEG.

It belongs to the class IV-like SAM-binding methyltransferase superfamily. RNA methyltransferase TrmH family.

It is found in the mitochondrion matrix. It carries out the reaction guanosine(1145) in 16S rRNA + S-adenosyl-L-methionine = 2'-O-methylguanosine(1145) in 16S rRNA + S-adenosyl-L-homocysteine + H(+). S-adenosyl-L-methionine-dependent 2'-O-ribose methyltransferase that catalyzes the formation of 2'-O-methylguanosine at position 1145 (Gm1145) in the 16S mitochondrial large subunit ribosomal RNA (mtLSU rRNA), a universally conserved modification in the peptidyl transferase domain of the mtLSU rRNA. The chain is rRNA methyltransferase 1, mitochondrial from Homo sapiens (Human).